Consider the following 175-residue polypeptide: Protein ppBat (175 aa).

Zn(2+)-binding residues include cysteine 74 and cysteine 111. Riboflavin is bound by residues asparagine 161 and tryptophan 164.

In terms of assembly, homodimer.

Binds flavin derivatives, such as lumichrome, riboflavin, FMN, and FAD. May act as a flavin storage protein. Appears to lack proteolytic or chaperone activities. This chain is Protein ppBat, found in Bacteroides thetaiotaomicron (strain ATCC 29148 / DSM 2079 / JCM 5827 / CCUG 10774 / NCTC 10582 / VPI-5482 / E50).